Consider the following 272-residue polypeptide: 3-deoxy-manno-octulosonate cytidylyltransferase (272 aa).

Belongs to the KdsB family.

The protein localises to the cytoplasm. The enzyme catalyses 3-deoxy-alpha-D-manno-oct-2-ulosonate + CTP = CMP-3-deoxy-beta-D-manno-octulosonate + diphosphate. Its pathway is nucleotide-sugar biosynthesis; CMP-3-deoxy-D-manno-octulosonate biosynthesis; CMP-3-deoxy-D-manno-octulosonate from 3-deoxy-D-manno-octulosonate and CTP: step 1/1. It participates in bacterial outer membrane biogenesis; lipopolysaccharide biosynthesis. In terms of biological role, activates KDO (a required 8-carbon sugar) for incorporation into bacterial lipopolysaccharide in Gram-negative bacteria. This chain is 3-deoxy-manno-octulosonate cytidylyltransferase, found in Verminephrobacter eiseniae (strain EF01-2).